Here is a 459-residue protein sequence, read N- to C-terminus: Cysteine--tRNA ligase (459 aa).

Cys28 is a Zn(2+) binding site. Positions Val30 to His40 match the 'HIGH' region motif. Residues Cys209, His234, and Glu238 each contribute to the Zn(2+) site. Residues Lys266–Ser270 carry the 'KMSKS' region motif. Lys269 provides a ligand contact to ATP.

It belongs to the class-I aminoacyl-tRNA synthetase family. As to quaternary structure, monomer. Zn(2+) serves as cofactor.

Its subcellular location is the cytoplasm. It catalyses the reaction tRNA(Cys) + L-cysteine + ATP = L-cysteinyl-tRNA(Cys) + AMP + diphosphate. The polypeptide is Cysteine--tRNA ligase (cysS) (Haemophilus influenzae (strain ATCC 51907 / DSM 11121 / KW20 / Rd)).